The sequence spans 384 residues: S-adenosylmethionine synthase (384 aa).

Residue His-15 coordinates ATP. A Mg(2+)-binding site is contributed by Asp-17. Glu-43 lines the K(+) pocket. Residues Glu-56 and Gln-99 each contribute to the L-methionine site. Residues 99 to 109 (QSPDINQGVDR) form a flexible loop region. Residues 164-166 (DAK), 230-231 (RF), Asp-239, 245-246 (RK), Ala-262, and Lys-266 each bind ATP. Asp-239 serves as a coordination point for L-methionine. Lys-270 is a binding site for L-methionine.

This sequence belongs to the AdoMet synthase family. Homotetramer; dimer of dimers. The cofactor is Mg(2+). It depends on K(+) as a cofactor.

It localises to the cytoplasm. It catalyses the reaction L-methionine + ATP + H2O = S-adenosyl-L-methionine + phosphate + diphosphate. The protein operates within amino-acid biosynthesis; S-adenosyl-L-methionine biosynthesis; S-adenosyl-L-methionine from L-methionine: step 1/1. Catalyzes the formation of S-adenosylmethionine (AdoMet) from methionine and ATP. The overall synthetic reaction is composed of two sequential steps, AdoMet formation and the subsequent tripolyphosphate hydrolysis which occurs prior to release of AdoMet from the enzyme. The polypeptide is S-adenosylmethionine synthase (Yersinia pseudotuberculosis serotype IB (strain PB1/+)).